The following is a 502-amino-acid chain: T-complex protein 11-like X-linked protein 2 (502 aa).

Residues Met1–Cys36 form a disordered region.

It belongs to the TCP11 family.

The sequence is that of T-complex protein 11-like X-linked protein 2 from Homo sapiens (Human).